Here is a 156-residue protein sequence, read N- to C-terminus: Phosphopantetheine adenylyltransferase (156 aa).

Thr-10 serves as a coordination point for substrate. ATP contacts are provided by residues 10-11 and His-18; that span reads TF. Residues Lys-42, Leu-74, and Arg-88 each coordinate substrate. Residues 89–91, Glu-99, and 124–130 contribute to the ATP site; these read GLR and NAFISSS.

It belongs to the bacterial CoaD family. Homohexamer. Mg(2+) is required as a cofactor.

The protein resides in the cytoplasm. The catalysed reaction is (R)-4'-phosphopantetheine + ATP + H(+) = 3'-dephospho-CoA + diphosphate. The protein operates within cofactor biosynthesis; coenzyme A biosynthesis; CoA from (R)-pantothenate: step 4/5. In terms of biological role, reversibly transfers an adenylyl group from ATP to 4'-phosphopantetheine, yielding dephospho-CoA (dPCoA) and pyrophosphate. This chain is Phosphopantetheine adenylyltransferase, found in Campylobacter curvus (strain 525.92).